A 312-amino-acid polypeptide reads, in one-letter code: DNA-directed RNA polymerase subunit alpha (312 aa).

Positions 1-226 (MIEFEKPTIT…EHLGLFTDLT (226 aa)) are alpha N-terminal domain (alpha-NTD). The segment at 242–312 (SDDRMLDRTI…DLGLGLKKDK (71 aa)) is alpha C-terminal domain (alpha-CTD).

The protein belongs to the RNA polymerase alpha chain family. In terms of assembly, homodimer. The RNAP catalytic core consists of 2 alpha, 1 beta, 1 beta' and 1 omega subunit. When a sigma factor is associated with the core the holoenzyme is formed, which can initiate transcription.

The catalysed reaction is RNA(n) + a ribonucleoside 5'-triphosphate = RNA(n+1) + diphosphate. Functionally, DNA-dependent RNA polymerase catalyzes the transcription of DNA into RNA using the four ribonucleoside triphosphates as substrates. The sequence is that of DNA-directed RNA polymerase subunit alpha from Streptococcus suis (strain 98HAH33).